Here is a 186-residue protein sequence, read N- to C-terminus: MAAKIFCLIMLLGLSASAATASIFPQCSQAPIASLLPPYLSPAMSSVCENPILLPYRIQQAIAAGILPLSPLFLQQSSALLQQLPLVHLLAQNIRAQQLQQLVLANLAAYSQQQQLPLVHLLAQNIRAQQLQQLVLANLAAYSQQQQFLPFNQQLAAAYPRQFLPFNQLAALNSHAYVQQQQLLPF.

The N-terminal stretch at 1-21 (MAAKIFCLIMLLGLSASAATA) is a signal peptide.

It belongs to the zein family.

Functionally, zeins are major seed storage proteins. The protein is Zein-alpha PZ19.1 of Zea mays (Maize).